A 137-amino-acid polypeptide reads, in one-letter code: Small ribosomal subunit protein uS12 (137 aa).

Residue Asp-89 is modified to 3-methylthioaspartic acid. Residues 101–137 form a disordered region; that stretch reads SLDTSGVADRKQSRSKYGAKQPKAGAPAAPVKGKGKK. The segment covering 116 to 137 has biased composition (low complexity); that stretch reads KYGAKQPKAGAPAAPVKGKGKK.

This sequence belongs to the universal ribosomal protein uS12 family. Part of the 30S ribosomal subunit. Contacts proteins S8 and S17. May interact with IF1 in the 30S initiation complex.

With S4 and S5 plays an important role in translational accuracy. Its function is as follows. Interacts with and stabilizes bases of the 16S rRNA that are involved in tRNA selection in the A site and with the mRNA backbone. Located at the interface of the 30S and 50S subunits, it traverses the body of the 30S subunit contacting proteins on the other side and probably holding the rRNA structure together. The combined cluster of proteins S8, S12 and S17 appears to hold together the shoulder and platform of the 30S subunit. This chain is Small ribosomal subunit protein uS12, found in Chlorobium chlorochromatii (strain CaD3).